A 414-amino-acid polypeptide reads, in one-letter code: Succinylornithine transaminase (414 aa).

Lys-260 carries the post-translational modification N6-(pyridoxal phosphate)lysine.

This sequence belongs to the class-III pyridoxal-phosphate-dependent aminotransferase family. AstC subfamily. Pyridoxal 5'-phosphate is required as a cofactor.

It carries out the reaction N(2)-succinyl-L-ornithine + 2-oxoglutarate = N-succinyl-L-glutamate 5-semialdehyde + L-glutamate. Its pathway is amino-acid degradation; L-arginine degradation via AST pathway; L-glutamate and succinate from L-arginine: step 3/5. In terms of biological role, catalyzes the transamination of N(2)-succinylornithine and alpha-ketoglutarate into N(2)-succinylglutamate semialdehyde and glutamate. Can also act as an acetylornithine aminotransferase. The polypeptide is Succinylornithine transaminase (Yersinia pestis bv. Antiqua (strain Antiqua)).